An 825-amino-acid polypeptide reads, in one-letter code: Actin filament-associated protein 1-like 2 (825 aa).

Tyrosine 56 bears the Phosphotyrosine mark. The tract at residues 62–163 is disordered; that stretch reads VNGEQNSASP…SKGKAAPYQW (102 aa). Over residues 80–94 the composition is skewed to polar residues; that stretch reads PLTNGEPSQHSSAPQ. Threonine 113 bears the Phosphothreonine mark. PH domains follow at residues 175–271 and 353–447; these read DARI…EVSG and SLET…SESG. A Phosphoserine modification is found at serine 408. Tyrosine 413 is subject to Phosphotyrosine. Serine 484 carries the phosphoserine modification. The segment at 571–614 is disordered; that stretch reads TLTVDPKPGTTPEEPHTESPGDPEVQQRQPEVQESSEPIEPTPR. Residues 593 to 608 show a composition bias toward low complexity; it reads PEVQQRQPEVQESSEP. A coiled-coil region spans residues 657 to 754; it reads AEIKLGKNRT…VKDNLKKAEA (98 aa). Residues 757–801 are disordered; sequence VTLGTTVDTTHLDNMSPRPQPKAATPNPPPDSTPVNSASVLKNRP. Positions 759-769 are enriched in polar residues; the sequence is LGTTVDTTHLD.

In terms of assembly, interacts with SRC. Interacts with LCK when tyrosine phosphorylated. Post-translationally, tyrosine phosphorylated (by SRC).

Its subcellular location is the cytoplasm. May play a role in a signaling cascade by enhancing the kinase activity of SRC. Contributes to SRC-regulated transcription activation. In Mus musculus (Mouse), this protein is Actin filament-associated protein 1-like 2 (Afap1l2).